The following is a 375-amino-acid chain: Trans-enoyl reductase iccB (375 aa).

An NADP(+)-binding site is contributed by 48 to 51 (VDAK). Substrate is bound at residue 143-150 (AAVATVGL). NADP(+) is bound by residues 204–207 (SSAS), Tyr222, and 269–270 (LD). Position 289 to 293 (289 to 293 (TYSQF)) interacts with substrate. Residue 358 to 359 (IK) participates in NADP(+) binding.

This sequence belongs to the zinc-containing alcohol dehydrogenase family. In terms of assembly, monomer.

It catalyses the reaction N-[(4E,6E,10S,12Z,14E)-6,10-dimethyl-3-oxohexadeca-4,6,12,14-tetraenoyl]-L-tyrosyl-[ACP] = (3E,5S)-3-[(2E,4E,8S,10E,12Z)-1-hydroxy-4,8-dimethyltetradeca-2,4,10,12-tetraen-1-ylidene]-5-[(4-hydroxyphenyl)methyl]pyrrolidine-2,4-dione + holo-[ACP] + H(+). The protein operates within mycotoxin biosynthesis. Trans-enoyl reductase; part of the gene cluster that mediates the biosynthesis of ilicicolin H, a 4-hydroxy-2-pyridonealkaloid that has potent and broad antifungal activities by inhibiting the mitochondrial respiration chain. IccB collaborates with the hybrid PKS-NRPS synthetase iccA to assemble the backbone of ilicicolin H. The PKS portion of iccA and trans-acting enoyl reductase iccB work together to construct an octaketide, and two methyl groups are introduced by the MT domain of iccA during the chain assembly. The nascent chain is then condensed with tyrosine, catalyzed by the iliA C domain, and the resulting PKS-NRPS hybrid is offloaded by the iliA RED domain to form an advanced tetramic acid intermediate. The biosynthesis of ilicicolin H starts with formation of the tetramic acid by the hybrid PKS-NRPS synthetase iccA with the partnering trans-enoyl reductase iccB since iccA lacks a designated enoylreductase (ER) domain. The cytochrome P450 monooxygenase iccC then catalyzes the ring expansion of the tetramate to the acyclic 2-pyridone. The pericyclase iccD further converts the acyclic 2-pyridone into 8-epi-ilicicolin H. Finally, the epimerase iccE converts 8-epi-ilicicolin H into ilicicolin H via epimerization. IccA to iccE are sufficient for ilicicolin H biosynthesis and the roles of the remaining enzymes, iccF, iccG and iccH within the pathway have still to be determined. This is Trans-enoyl reductase iccB from Talaromyces variabilis (Penicillium variabile).